The following is a 188-amino-acid chain: MTKFLGPIAGFGVTFSTMFKKSNTEFYPEEKVPTAPRYHGRHQLNRYADGLEKCIGCELCAWACPADAIYVEGADNTDEERFSPGERYGQVYQINYLRCIGCGLCIEACPTRALTMTNEYEMADDNRAGLIYEKDRLLAPLEPGMVESPHPMAPGATAEDYYRGTVTGGAAAAAQDESEVDDTAGDRP.

2 consecutive 4Fe-4S ferredoxin-type domains span residues 44–74 (LNRY…VEGA) and 90–119 (QVYQ…MTNE). Positions 54, 57, 60, 64, 99, 102, 105, and 109 each coordinate [4Fe-4S] cluster. Residues 167–188 (TGGAAAAAQDESEVDDTAGDRP) are disordered. Positions 176 to 188 (DESEVDDTAGDRP) are enriched in acidic residues.

This sequence belongs to the complex I 23 kDa subunit family. In terms of assembly, NDH-1 is composed of 14 different subunits. Subunits NuoA, H, J, K, L, M, N constitute the membrane sector of the complex. The cofactor is [4Fe-4S] cluster.

It localises to the cell membrane. It carries out the reaction a quinone + NADH + 5 H(+)(in) = a quinol + NAD(+) + 4 H(+)(out). Its function is as follows. NDH-1 shuttles electrons from NADH, via FMN and iron-sulfur (Fe-S) centers, to quinones in the respiratory chain. The immediate electron acceptor for the enzyme in this species is believed to be ubiquinone. Couples the redox reaction to proton translocation (for every two electrons transferred, four hydrogen ions are translocated across the cytoplasmic membrane), and thus conserves the redox energy in a proton gradient. This chain is NADH-quinone oxidoreductase subunit I, found in Rhodococcus jostii (strain RHA1).